The sequence spans 852 residues: Polyphosphate kinase (852 aa).

Disordered regions lie at residues 1–36 (MATG…DRPI) and 58–82 (SHDP…SRRK). A compositionally biased stretch (basic and acidic residues) spans 20 to 36 (VARDHPGCGPHRLDRPI). Residues 58–67 (SHDPAPSQSV) are compositionally biased toward polar residues. N131 serves as a coordination point for ATP. Positions 251–303 (GDEIGPQRTPPPSDSLDNRVPSNLKRNSDTANQQPTPAENISAPEDGAEQTEP) are disordered. The tract at residues 258–303 (RTPPPSDSLDNRVPSNLKRNSDTANQQPTPAENISAPEDGAEQTEP) is insert. Positions 270–289 (VPSNLKRNSDTANQQPTPAE) are enriched in polar residues. 2 residues coordinate Mg(2+): R524 and R554. H584 serves as the catalytic Phosphohistidine intermediate. ATP-binding residues include Y617, R713, and H741.

It belongs to the polyphosphate kinase 1 (PPK1) family. Mg(2+) is required as a cofactor. Post-translationally, an intermediate of this reaction is the autophosphorylated ppk in which a phosphate is covalently linked to a histidine residue through a N-P bond.

It carries out the reaction [phosphate](n) + ATP = [phosphate](n+1) + ADP. Functionally, catalyzes the reversible transfer of the terminal phosphate of ATP to form a long-chain polyphosphate (polyP). The chain is Polyphosphate kinase from Rhodopirellula baltica (strain DSM 10527 / NCIMB 13988 / SH1).